Here is an 83-residue protein sequence, read N- to C-terminus: Conotoxin p21a (83 aa).

P24 and P43 each carry 4-hydroxyproline; partial. At H83 the chain carries Histidine amide.

As to quaternary structure, may form a non-covalent dimer. In terms of processing, contains 5 disulfide bonds. In terms of tissue distribution, expressed by the venom duct.

The protein resides in the secreted. The polypeptide is Conotoxin p21a (Conus purpurascens (Purple cone)).